The following is a 352-amino-acid chain: O(6)-methylguanine-induced apoptosis 2 (352 aa).

STPGR repeat units lie at residues 80 to 90 (NPGPGAYNVAR), 124 to 139 (PAPN…FSKK), 165 to 171 (PAPNQYS), 205 to 235 (GPSP…KTSR), 244 to 263 (NPGP…KKII), 286 to 295 (PGPGHYDIVD), and 325 to 335 (LPGPGAYHPEI).

The protein belongs to the STPG1 family.

It localises to the cytoplasm. The protein localises to the nucleus. May positively contribute to the induction of apoptosis triggered by O(6)-methylguanine. The polypeptide is O(6)-methylguanine-induced apoptosis 2 (stpg1) (Xenopus laevis (African clawed frog)).